The primary structure comprises 513 residues: Putative thymidine phosphorylase (513 aa).

It belongs to the thymidine/pyrimidine-nucleoside phosphorylase family. Type 2 subfamily.

It carries out the reaction thymidine + phosphate = 2-deoxy-alpha-D-ribose 1-phosphate + thymine. The polypeptide is Putative thymidine phosphorylase (Rhodopseudomonas palustris (strain BisB18)).